The following is a 125-amino-acid chain: Small ribosomal subunit protein uS13 (125 aa).

The protein belongs to the universal ribosomal protein uS13 family. Part of the 30S ribosomal subunit. Forms a loose heterodimer with protein S19. Forms two bridges to the 50S subunit in the 70S ribosome.

In terms of biological role, located at the top of the head of the 30S subunit, it contacts several helices of the 16S rRNA. In the 70S ribosome it contacts the 23S rRNA (bridge B1a) and protein L5 of the 50S subunit (bridge B1b), connecting the 2 subunits; these bridges are implicated in subunit movement. Contacts the tRNAs in the A and P-sites. The polypeptide is Small ribosomal subunit protein uS13 (Rickettsia typhi (strain ATCC VR-144 / Wilmington)).